The primary structure comprises 758 residues: Meiotic driver SPOK4 (758 aa).

The stretch at 4–41 forms a coiled coil; the sequence is KDRITQLLRKLEEAKAREEEAKAREAQERCEKERLQLE. 2 disordered regions span residues 180-230 and 414-499; these read ELTQ…GVGI and LSSA…MADP. The segment covering 181–190 has biased composition (basic and acidic residues); sequence LTQEDDRSSG. Polar residues predominate over residues 416 to 429; that stretch reads SAASSQNTENSEYT. Over residues 457-468 the composition is skewed to basic and acidic residues; sequence NEHDEHDEDHSE.

Its subcellular location is the cytoplasm. It localises to the nucleus. In terms of biological role, promotes unequal transmission of alleles from the parental zygote to progeny spores by acting as poison/antidote system, leading to poisoning of progeny that do not inherit the allele. May possess DNA nuclease activity that leads to spore killing, and a kinase activity that confers resistance to the nuclease activity. Can suppress meiotic drive by the P.comata SPOK1 protein. The sequence is that of Meiotic driver SPOK4 from Podospora anserina (Pleurage anserina).